Reading from the N-terminus, the 79-residue chain is NADH-ubiquinone oxidoreductase chain 5 (79 aa).

2 consecutive transmembrane segments (helical) span residues 5 to 27 and 40 to 57; these read TPIMMTTLISLTLPIFATLTNPY and VMYAFITSLPSTTLFILS.

Belongs to the complex I subunit 5 family. Core subunit of respiratory chain NADH dehydrogenase (Complex I) which is composed of 45 different subunits.

It localises to the mitochondrion inner membrane. It catalyses the reaction a ubiquinone + NADH + 5 H(+)(in) = a ubiquinol + NAD(+) + 4 H(+)(out). Its function is as follows. Core subunit of the mitochondrial membrane respiratory chain NADH dehydrogenase (Complex I) which catalyzes electron transfer from NADH through the respiratory chain, using ubiquinone as an electron acceptor. Essential for the catalytic activity and assembly of complex I. The chain is NADH-ubiquinone oxidoreductase chain 5 (MT-ND5) from Macaca fascicularis (Crab-eating macaque).